Consider the following 381-residue polypeptide: Homoserine O-succinyltransferase (381 aa).

Residues 45–360 (NAVLVCHALN…PHGHDAFLLD (316 aa)) enclose the AB hydrolase-1 domain. The active-site Nucleophile is the Ser151. Substrate is bound at residue Arg221. Residues Asp321 and His354 contribute to the active site. Residue Asp355 participates in substrate binding.

This sequence belongs to the AB hydrolase superfamily. MetX family. As to quaternary structure, homodimer.

The protein resides in the cytoplasm. It carries out the reaction L-homoserine + succinyl-CoA = O-succinyl-L-homoserine + CoA. The protein operates within amino-acid biosynthesis; L-methionine biosynthesis via de novo pathway; O-succinyl-L-homoserine from L-homoserine: step 1/1. Functionally, transfers a succinyl group from succinyl-CoA to L-homoserine, forming succinyl-L-homoserine. This Paraburkholderia xenovorans (strain LB400) protein is Homoserine O-succinyltransferase.